Consider the following 180-residue polypeptide: Adenine phosphoribosyltransferase (180 aa).

An N-acetylserine modification is found at serine 2. Serine 4, serine 15, and serine 30 each carry phosphoserine. Phosphotyrosine is present on tyrosine 60. Serine 66 is modified (phosphoserine). Lysine 114 carries the N6-acetyllysine modification. Threonine 135 bears the Phosphothreonine mark.

The protein belongs to the purine/pyrimidine phosphoribosyltransferase family. In terms of assembly, homodimer.

It is found in the cytoplasm. It carries out the reaction AMP + diphosphate = 5-phospho-alpha-D-ribose 1-diphosphate + adenine. The protein operates within purine metabolism; AMP biosynthesis via salvage pathway; AMP from adenine: step 1/1. Catalyzes a salvage reaction resulting in the formation of AMP, that is energically less costly than de novo synthesis. This chain is Adenine phosphoribosyltransferase, found in Mus pahari (Gairdner's shrew-mouse).